Reading from the N-terminus, the 717-residue chain is Fatty acid oxidation complex subunit alpha (717 aa).

Residues 1-190 are enoyl-CoA hydratase; that stretch reads MESTSAFNLQ…KAGLVDDVVP (190 aa). A 3-hydroxyacyl-CoA dehydrogenase region spans residues 306–717; sequence RALHSVGVLG…AGNLQAEMTV (412 aa).

It in the N-terminal section; belongs to the enoyl-CoA hydratase/isomerase family. This sequence in the central section; belongs to the 3-hydroxyacyl-CoA dehydrogenase family. As to quaternary structure, heterotetramer of two alpha chains (FadJ) and two beta chains (FadI).

It localises to the cytoplasm. The enzyme catalyses a (3S)-3-hydroxyacyl-CoA = a (2E)-enoyl-CoA + H2O. The catalysed reaction is a 4-saturated-(3S)-3-hydroxyacyl-CoA = a (3E)-enoyl-CoA + H2O. It carries out the reaction a (3S)-3-hydroxyacyl-CoA + NAD(+) = a 3-oxoacyl-CoA + NADH + H(+). It catalyses the reaction (3S)-3-hydroxybutanoyl-CoA = (3R)-3-hydroxybutanoyl-CoA. The protein operates within lipid metabolism; fatty acid beta-oxidation. In terms of biological role, catalyzes the formation of a hydroxyacyl-CoA by addition of water on enoyl-CoA. Also exhibits 3-hydroxyacyl-CoA epimerase and 3-hydroxyacyl-CoA dehydrogenase activities. The chain is Fatty acid oxidation complex subunit alpha from Cronobacter sakazakii (strain ATCC BAA-894) (Enterobacter sakazakii).